A 442-amino-acid chain; its full sequence is Chromosomal replication initiator protein DnaA (442 aa).

The domain I, interacts with DnaA modulators stretch occupies residues 1–68 (MDAWPRCLER…ELLAYFVGNG (68 aa)). A domain II region spans residues 68 to 104 (GDVALAVGSRPRAPEPAPAPVAVPSAPQAAPIVPFAG). Residues 105 to 322 (NLDSHYTFAN…GALNTLVARA (218 aa)) are domain III, AAA+ region. The ATP site is built by glycine 150, glycine 152, lysine 153, and threonine 154. The segment at 323 to 442 (NFTGRSITVE…WEKLIRKLSE (120 aa)) is domain IV, binds dsDNA.

Belongs to the DnaA family. In terms of assembly, oligomerizes as a right-handed, spiral filament on DNA at oriC.

Its subcellular location is the cytoplasm. Plays an essential role in the initiation and regulation of chromosomal replication. ATP-DnaA binds to the origin of replication (oriC) to initiate formation of the DNA replication initiation complex once per cell cycle. Binds the DnaA box (a 9 base pair repeat at the origin) and separates the double-stranded (ds)DNA. Forms a right-handed helical filament on oriC DNA; dsDNA binds to the exterior of the filament while single-stranded (ss)DNA is stabiized in the filament's interior. The ATP-DnaA-oriC complex binds and stabilizes one strand of the AT-rich DNA unwinding element (DUE), permitting loading of DNA polymerase. After initiation quickly degrades to an ADP-DnaA complex that is not apt for DNA replication. Binds acidic phospholipids. This is Chromosomal replication initiator protein DnaA from Xanthomonas axonopodis pv. citri (strain 306).